Reading from the N-terminus, the 270-residue chain is Homeobox protein vent1B (270 aa).

2 stretches are compositionally biased toward basic and acidic residues: residues 17-26 and 44-59; these read EEAADGKDSM and YAKE…DVQE. Disordered stretches follow at residues 17–66 and 88–134; these read EEAA…SFQC and TWGS…LRTA. Over residues 89 to 99 the composition is skewed to polar residues; sequence WGSSDEFSSAG. The span at 116 to 131 shows a compositional bias: basic and acidic residues; sequence QDTDHNGKSTKSDRRL. Positions 128–187 form a DNA-binding region, homeobox; it reads DRRLRTAFSPQQISKLEQAFNKQRYLGASERKKLATSLMLSEIQVKTWFQNRRMKLKRQI.

Expressed in the ventral marginal zone of gastrulae. At the end of gastrulation, predominantly localized to the ventral region of the closing slit blastopore. At early tail bud stage, expression is maintained only in the forming proctodeum.

The protein localises to the nucleus. In terms of biological role, probable transcription regulator. Acts in a ventral signaling pathway downstream of bmp4 and vent2B. The sequence is that of Homeobox protein vent1B (vent1B) from Xenopus laevis (African clawed frog).